Here is a 628-residue protein sequence, read N- to C-terminus: Glutamine--fructose-6-phosphate aminotransferase [isomerizing] (628 aa).

The active-site Nucleophile; for GATase activity is Cys-2. A Glutamine amidotransferase type-2 domain is found at 2 to 229 (CGIVGYVGHR…QDQAVVLTAD (228 aa)). Residues 61–94 (ETDSNDGDGLGGSTGLGHTRWATHGRPTDRNAHP) form a disordered region. SIS domains are found at residues 301 to 440 (SDQE…ARGT) and 473 to 618 (LAER…VDKP). Lys-623 acts as the For Fru-6P isomerization activity in catalysis.

As to quaternary structure, homodimer.

Its subcellular location is the cytoplasm. It catalyses the reaction D-fructose 6-phosphate + L-glutamine = D-glucosamine 6-phosphate + L-glutamate. Catalyzes the first step in hexosamine metabolism, converting fructose-6P into glucosamine-6P using glutamine as a nitrogen source. The polypeptide is Glutamine--fructose-6-phosphate aminotransferase [isomerizing] (Mycolicibacterium smegmatis (strain ATCC 700084 / mc(2)155) (Mycobacterium smegmatis)).